We begin with the raw amino-acid sequence, 1097 residues long: DNA-directed RNA polymerase subunit beta (1097 aa).

The interval 1072-1097 (QDINPRRNTPSRPTYESLGTSEYEED) is disordered. Positions 1077 to 1091 (RRNTPSRPTYESLGT) are enriched in polar residues.

The protein belongs to the RNA polymerase beta chain family. In terms of assembly, in cyanobacteria the RNAP catalytic core is composed of 2 alpha, 1 beta, 1 beta', 1 gamma and 1 omega subunit. When a sigma factor is associated with the core the holoenzyme is formed, which can initiate transcription.

The enzyme catalyses RNA(n) + a ribonucleoside 5'-triphosphate = RNA(n+1) + diphosphate. In terms of biological role, DNA-dependent RNA polymerase catalyzes the transcription of DNA into RNA using the four ribonucleoside triphosphates as substrates. In Prochlorococcus marinus (strain AS9601), this protein is DNA-directed RNA polymerase subunit beta.